We begin with the raw amino-acid sequence, 589 residues long: TAF5-like RNA polymerase II p300/CBP-associated factor-associated factor 65 kDa subunit 5L (589 aa).

WD repeat units follow at residues 266–305, 340–379, 382–421, 424–463, 466–505, and 508–547; these read NTEQ…LKSE, GHCG…NTVL, GHAY…PLRI, GHLA…SVRL, GHRG…LFKE, and GHTD…CNTP.

This sequence belongs to the WD repeat TAF5 family. The PCAF complex is composed of a number of TBP-associated factors (TAFS), such as TAF5, TAF5L, TAF6, TAF6L, TAF9, TAF10 and TAF12, PCAF, and also PCAF-associated factors (PAFs), such as TADA2L/ADA2, TADA3L/ADA3 and SPT3. Component of the STAGA transcription coactivator-HAT complex, at least composed of SUPT3H, GCN5L2, TAF5L, TAF6L, SUPT7L, TADA3L, TAD1L, TAF10, TAF12, TRRAP and TAF9.

It is found in the nucleus. Functionally, functions as a component of the PCAF complex. The PCAF complex is capable of efficiently acetylating histones in a nucleosomal context. The PCAF complex could be considered as the human version of the yeast SAGA complex. With TAF6L, acts as an epigenetic regulator essential for somatic reprogramming. Regulates target genes through H3K9ac deposition and MYC recruitment which trigger MYC regulatory network to orchestrate gene expression programs to control embryonic stem cell state. This chain is TAF5-like RNA polymerase II p300/CBP-associated factor-associated factor 65 kDa subunit 5L, found in Mus musculus (Mouse).